A 220-amino-acid polypeptide reads, in one-letter code: Probable glutathione S-transferase parA (220 aa).

Positions 4–83 (NNVVLLDFWP…YIDEVWHDKC (80 aa)) constitute a GST N-terminal domain. Glutathione-binding positions include serine 14, lysine 41, isoleucine 55, and 67 to 68 (ES). Residues 89 to 209 (DPYERSQARF…LPHPHKIYGF (121 aa)) form the GST C-terminal domain.

It belongs to the GST superfamily. HSP26 family.

The enzyme catalyses RX + glutathione = an S-substituted glutathione + a halide anion + H(+). This Nicotiana tabacum (Common tobacco) protein is Probable glutathione S-transferase parA (PARA).